The chain runs to 376 residues: Probable dual-specificity RNA methyltransferase RlmN (376 aa).

Glu96 functions as the Proton acceptor in the catalytic mechanism. The Radical SAM core domain maps to 102–346; the sequence is YPDRSTVCVS…CTVRVERGVE (245 aa). Cys109 and Cys351 are oxidised to a cystine. Positions 116, 120, and 123 each coordinate [4Fe-4S] cluster. S-adenosyl-L-methionine contacts are provided by residues 171-172, Ser203, 226-228, and Asn308; these read GE and SLH. Residue Cys351 is the S-methylcysteine intermediate of the active site.

It belongs to the radical SAM superfamily. RlmN family. [4Fe-4S] cluster serves as cofactor.

The protein localises to the cytoplasm. It catalyses the reaction adenosine(2503) in 23S rRNA + 2 reduced [2Fe-2S]-[ferredoxin] + 2 S-adenosyl-L-methionine = 2-methyladenosine(2503) in 23S rRNA + 5'-deoxyadenosine + L-methionine + 2 oxidized [2Fe-2S]-[ferredoxin] + S-adenosyl-L-homocysteine. It carries out the reaction adenosine(37) in tRNA + 2 reduced [2Fe-2S]-[ferredoxin] + 2 S-adenosyl-L-methionine = 2-methyladenosine(37) in tRNA + 5'-deoxyadenosine + L-methionine + 2 oxidized [2Fe-2S]-[ferredoxin] + S-adenosyl-L-homocysteine. Functionally, specifically methylates position 2 of adenine 2503 in 23S rRNA and position 2 of adenine 37 in tRNAs. The chain is Probable dual-specificity RNA methyltransferase RlmN from Chloroflexus aurantiacus (strain ATCC 29366 / DSM 635 / J-10-fl).